We begin with the raw amino-acid sequence, 523 residues long: DELLA protein RGL3 (523 aa).

The interval 1 to 28 (MKRSHQETSVEEEAPSMVEKLENGCGGG) is disordered. The short motif at 34-38 (DEFLA) is the DELLA motif element. Positions 56–60 (LEQLE) match the LEXLE motif motif. The short motif at 78–82 (VHYNP) is the VHYNP motif element. In terms of domain architecture, GRAS spans 148-516 (VLIEETGVRL…KPLIAASAWK (369 aa)). The leucine repeat I (LRI) stretch occupies residues 155 to 209 (VRLVQALVACAEAVQLENLSLADALVKRVGLLAASQAGAMGKVATYFAEALARRI). Positions 228-293 (QMNFYDSCPY…GGPPSFRLTG (66 aa)) are VHIID. A VHIID motif is present at residues 259–263 (VHVID). The interval 305-337 (ELGWKLAQLAQAIGVEFKFNGLTTERLSDLEPD) is leucine repeat II (LRII). The tract at residues 348-437 (LVVNSVFELH…EVYLGRQILN (90 aa)) is PFYRE. The LXXLL motif motif lies at 356 to 360 (LHPVL). The SAW stretch occupies residues 440–516 (ATEGSDRIER…KPLIAASAWK (77 aa)).

The protein belongs to the GRAS family. DELLA subfamily. As to quaternary structure, interacts directly with the GID2/SLY1 component of the SCF(GID2) complex, suggesting that it may be ubiquitinated. Interacts (via N-terminus) with GID1A, GID1B and GID1B (via N-terminus). Interacts with the BOI proteins BOI, BRG1, BRG2 and BRG3. Phosphorylated. In terms of processing, may be ubiquitinated. Expressed at very low level. Mainly expressed in germinating seeds and flowers and siliques. Not expressed in other tissues.

Its subcellular location is the nucleus. Functionally, probable transcriptional regulator that acts as a repressor of the gibberellin (GA) signaling pathway. No effect of the BOI proteins on its stability. Probably acts by participating in large multiprotein complexes that repress transcription of GA-inducible genes. Its activity may be regulated by phytohormones such as auxin and ethylene. The protein is DELLA protein RGL3 (RGL3) of Arabidopsis thaliana (Mouse-ear cress).